Reading from the N-terminus, the 304-residue chain is Calmodulin-lysine N-methyltransferase (304 aa).

This sequence belongs to the class I-like SAM-binding methyltransferase superfamily. CLNMT methyltransferase family. As to quaternary structure, monomer. Expressed in discreet spatial and tissue-specific patterns including root tips, leaves-tips, floral buds, stamens, hydathodes, stigma, anther, siliques, apical meristems and germinating seeds. Also observed at high levels in the root stele region.

It localises to the cytoplasm. The protein localises to the nucleus. It catalyses the reaction [calmodulin]-L-lysine + S-adenosyl-L-methionine = [calmodulin]-N(6)-methyl-L-lysine + S-adenosyl-L-homocysteine + H(+). Catalyzes the trimethylation of calmodulin. Regulates roots development probably by modulating auxin signaling responses. May be involved in gravitropism. Involved in abscisic acid (ABA)-mediated and abiotic stress responses, including salt (NaCl), cold, drought and heat stresses. This Arabidopsis thaliana (Mouse-ear cress) protein is Calmodulin-lysine N-methyltransferase.